The primary structure comprises 245 residues: DNA polymerase sliding clamp 2 (245 aa).

Belongs to the PCNA family. Homotrimer. The subunits circularize to form a toroid; DNA passes through its center. Replication factor C (RFC) is required to load the toroid on the DNA.

In terms of biological role, sliding clamp subunit that acts as a moving platform for DNA processing. Responsible for tethering the catalytic subunit of DNA polymerase and other proteins to DNA during high-speed replication. This Sulfolobus acidocaldarius (strain ATCC 33909 / DSM 639 / JCM 8929 / NBRC 15157 / NCIMB 11770) protein is DNA polymerase sliding clamp 2.